A 289-amino-acid polypeptide reads, in one-letter code: 4-hydroxy-tetrahydrodipicolinate synthase (289 aa).

T43 is a pyruvate binding site. The active-site Proton donor/acceptor is Y131. The active-site Schiff-base intermediate with substrate is the K160. I200 serves as a coordination point for pyruvate.

This sequence belongs to the DapA family. As to quaternary structure, homotetramer; dimer of dimers.

Its subcellular location is the cytoplasm. The catalysed reaction is L-aspartate 4-semialdehyde + pyruvate = (2S,4S)-4-hydroxy-2,3,4,5-tetrahydrodipicolinate + H2O + H(+). Its pathway is amino-acid biosynthesis; L-lysine biosynthesis via DAP pathway; (S)-tetrahydrodipicolinate from L-aspartate: step 3/4. In terms of biological role, catalyzes the condensation of (S)-aspartate-beta-semialdehyde [(S)-ASA] and pyruvate to 4-hydroxy-tetrahydrodipicolinate (HTPA). This Methanococcus vannielii (strain ATCC 35089 / DSM 1224 / JCM 13029 / OCM 148 / SB) protein is 4-hydroxy-tetrahydrodipicolinate synthase.